The primary structure comprises 66 residues: Beta-mammal toxin Cv5 (66 aa).

The LCN-type CS-alpha/beta domain occupies lysine 1–asparagine 66. 4 cysteine pairs are disulfide-bonded: cysteine 12-cysteine 65, cysteine 16-cysteine 41, cysteine 25-cysteine 46, and cysteine 29-cysteine 48.

Expressed by the venom gland.

It is found in the secreted. Its activity is regulated as follows. Is susceptible to be neutralized by human antibodies scFvs 10FG2 and HV. Functionally, beta toxins bind voltage-independently at site-4 of sodium channels (Nav) and reduces peak current and shifts the voltage of activation toward more negative potentials thereby affecting sodium channel activation and promoting spontaneous and repetitive firing. This toxin is moderately toxic to mice. This is Beta-mammal toxin Cv5 from Centruroides villegasi (Scorpion).